The chain runs to 390 residues: Monomeric sarcosine oxidase (390 aa).

6-36 serves as a coordination point for FAD; the sequence is DVIVVGAGSMGMAAGYQLAKQGVKTLLVDAF. The residue at position 316 (Cys316) is an S-8alpha-FAD cysteine.

Monomer. The cofactor is FAD.

It localises to the cytoplasm. The enzyme catalyses sarcosine + O2 + H2O = formaldehyde + glycine + H2O2. With respect to regulation, pyrrole-2-carboxylate is a competitive inhibitor. N-(cyclopropyl)glycine (CPG) is a mechanism-based inhibitor and inactivates the enzyme by covalently modifying the flavin. Functionally, catalyzes the oxidative demethylation of sarcosine. Can also oxidize other secondary amino acids such as N-methyl-L-alanine. This is Monomeric sarcosine oxidase (soxA) from Bacillus sp. (strain B-0618).